We begin with the raw amino-acid sequence, 254 residues long: Indole-3-glycerol phosphate synthase (254 aa).

Belongs to the TrpC family.

The catalysed reaction is 1-(2-carboxyphenylamino)-1-deoxy-D-ribulose 5-phosphate + H(+) = (1S,2R)-1-C-(indol-3-yl)glycerol 3-phosphate + CO2 + H2O. It functions in the pathway amino-acid biosynthesis; L-tryptophan biosynthesis; L-tryptophan from chorismate: step 4/5. This chain is Indole-3-glycerol phosphate synthase, found in Methanopyrus kandleri (strain AV19 / DSM 6324 / JCM 9639 / NBRC 100938).